The chain runs to 59 residues: Large ribosomal subunit protein uL30 (59 aa).

The protein belongs to the universal ribosomal protein uL30 family. As to quaternary structure, part of the 50S ribosomal subunit.

The polypeptide is Large ribosomal subunit protein uL30 (Macrococcus caseolyticus (strain JCSC5402) (Macrococcoides caseolyticum)).